A 248-amino-acid polypeptide reads, in one-letter code: MKFLVLVAFVGVTVAFPISDEDDDKIVGGYSCARSAAPYQVSLNSGYHFCGGSLISSQWVLSAAHCYKSSIQVKLGEYNLAAQDGSEQTISSSKVIRHSGYNANTLNNDIMLIKLSKAATLNSYVNTVPLPTSCVTAGTTCLISGWGNTLSSGSLYPDVLQCLNAPVLSSSQCSSAYPGRITSNMICIGYLNGGKDSCQGDSGGPVVCNGQLQGIVSWGIGCAQKGYPGVYTKVCNYVSWIKTTMSSN.

Positions 1–15 (MKFLVLVAFVGVTVA) are cleaved as a signal peptide. The propeptide at 16–25 (FPISDEDDDK) is activation peptide. The Peptidase S1 domain maps to 26–246 (IVGGYSCARS…YVSWIKTTMS (221 aa)). Disulfide bonds link Cys-32/Cys-162, Cys-50/Cys-66, Cys-134/Cys-235, Cys-141/Cys-208, Cys-173/Cys-187, and Cys-198/Cys-222. Catalysis depends on His-65, which acts as the Charge relay system. Ca(2+) contacts are provided by Glu-77, Asn-79, and Glu-87. Catalysis depends on Asp-109, which acts as the Charge relay system. The active-site Charge relay system is the Ser-202.

Belongs to the peptidase S1 family. The cofactor is Ca(2+). As to expression, high levels are seen in the pancreas while lower levels are found in the liver, spleen and thymus.

The protein resides in the secreted. It localises to the extracellular space. It catalyses the reaction Preferential cleavage: Arg-|-Xaa, Lys-|-Xaa.. This is Trypsin I-P1 from Gallus gallus (Chicken).